Here is a 625-residue protein sequence, read N- to C-terminus: Cysteine-rich receptor-like protein kinase 46 (625 aa).

Positions 1 to 23 are cleaved as a signal peptide; the sequence is MASTLISSLAVVLPLTLLAPSMS. Residues 24–252 lie on the Extracellular side of the membrane; the sequence is MKISRIDVLG…LLAMSFTKEN (229 aa). 2 consecutive Gnk2-homologous domains span residues 29–130 and 135–237; these read IDVL…NYSF and VSHQ…NYTF. Asn-38, Asn-127, Asn-234, and Asn-252 each carry an N-linked (GlcNAc...) asparagine glycan. A helical membrane pass occupies residues 253–273; that stretch reads LTYIFVISMVGVLAIAAGFWC. At 274–625 the chain is on the cytoplasmic side; the sequence is GKCFYMRTSP…TKPPFLHDSM (352 aa). Positions 331 to 621 constitute a Protein kinase domain; the sequence is FNESCKLGVG…LPTPTKPPFL (291 aa). Residues 337–345 and Lys-359 contribute to the ATP site; that span reads LGVGGYGEV. Position 404 is a phosphotyrosine (Tyr-404). The Proton acceptor role is filled by Asp-454. Ser-458 is modified (phosphoserine). The residue at position 499 (Thr-499) is a Phosphothreonine. Tyr-507 is subject to Phosphotyrosine.

Belongs to the protein kinase superfamily. Ser/Thr protein kinase family. CRK subfamily.

It localises to the membrane. It carries out the reaction L-seryl-[protein] + ATP = O-phospho-L-seryl-[protein] + ADP + H(+). The catalysed reaction is L-threonyl-[protein] + ATP = O-phospho-L-threonyl-[protein] + ADP + H(+). The polypeptide is Cysteine-rich receptor-like protein kinase 46 (Arabidopsis thaliana (Mouse-ear cress)).